The primary structure comprises 364 residues: DNA polymerase IV (364 aa).

Positions 14–198 (IIHIDMDAFF…LPIEKFHGVG (185 aa)) constitute a UmuC domain. Mg(2+) contacts are provided by aspartate 18 and aspartate 116. Residue glutamate 117 is part of the active site.

The protein belongs to the DNA polymerase type-Y family. Monomer. Mg(2+) serves as cofactor.

The protein resides in the cytoplasm. The enzyme catalyses DNA(n) + a 2'-deoxyribonucleoside 5'-triphosphate = DNA(n+1) + diphosphate. In terms of biological role, poorly processive, error-prone DNA polymerase involved in untargeted mutagenesis. Copies undamaged DNA at stalled replication forks, which arise in vivo from mismatched or misaligned primer ends. These misaligned primers can be extended by PolIV. Exhibits no 3'-5' exonuclease (proofreading) activity. May be involved in translesional synthesis, in conjunction with the beta clamp from PolIII. The polypeptide is DNA polymerase IV (Streptococcus pyogenes serotype M5 (strain Manfredo)).